A 361-amino-acid polypeptide reads, in one-letter code: GDSL esterase/lipase At4g18970 (361 aa).

A signal peptide spans 1-22 (MARVCVMMMAMAIAMAMNIAMG). S35 (nucleophile) is an active-site residue. Residues D325 and H328 contribute to the active site.

The protein belongs to the 'GDSL' lipolytic enzyme family.

The protein resides in the secreted. This is GDSL esterase/lipase At4g18970 from Arabidopsis thaliana (Mouse-ear cress).